Reading from the N-terminus, the 644-residue chain is Exoribonuclease 2 (644 aa).

The RNB domain maps to 189 to 516 (RQDLTALNFV…NHRLLKAVIK (328 aa)). The 83-residue stretch at 561–643 (NTRFAAEIID…ETRSIIARPA (83 aa)) folds into the S1 motif domain.

It belongs to the RNR ribonuclease family. RNase II subfamily.

It is found in the cytoplasm. It catalyses the reaction Exonucleolytic cleavage in the 3'- to 5'-direction to yield nucleoside 5'-phosphates.. Involved in mRNA degradation. Hydrolyzes single-stranded polyribonucleotides processively in the 3' to 5' direction. The protein is Exoribonuclease 2 of Salmonella paratyphi A (strain ATCC 9150 / SARB42).